Consider the following 473-residue polypeptide: Putative sulfoquinovose importer (473 aa).

Helical transmembrane passes span 18-38 (AYGVGDFGSNLMLCIGTLYLL), 45-65 (LGMPAYYGGIIFLVAKFFTAF), 88-108 (PFILYASFPVALVATAQFFAT), 110-130 (FTLPVKTAFATVLFMLFGLFY), 160-180 (GGATIGLLLCTVGFMPIQALF), 187-207 (GYLIAAVIFSVCGLFSMWWCF), 239-259 (LLVLCVANLCTLAAFNIKLAI), 276-296 (WMGFFSMGCILIGVLLVPAAV), 317-337 (ILNFIWGGTSFLFVIFSCIAF), 380-400 (ISAALAGFLPGIMLTQIGYIP), and 415-435 (LIFLWPCGLAIIAALTMGFFY).

The protein belongs to the sodium:galactoside symporter (TC 2.A.2) family.

It localises to the cell inner membrane. Could be involved in sulfoquinovose import. This chain is Putative sulfoquinovose importer (yihO), found in Salmonella typhimurium (strain LT2 / SGSC1412 / ATCC 700720).